The primary structure comprises 466 residues: Pyruvate kinase (466 aa).

Residue Arg-32 participates in substrate binding. K(+) contacts are provided by Asn-34, Ser-36, and Asp-66. 34–37 is an ATP binding site; it reads NTSH. ATP is bound at residue Arg-73. Glu-219 contacts Mg(2+). Residues Gly-242, Asp-243, and Thr-275 each coordinate substrate. Asp-243 serves as a coordination point for Mg(2+).

This sequence belongs to the pyruvate kinase family. Homotetramer. It depends on a divalent metal cation as a cofactor.

The catalysed reaction is pyruvate + ATP = phosphoenolpyruvate + ADP + H(+). The protein operates within carbohydrate degradation; glycolysis; pyruvate from D-glyceraldehyde 3-phosphate: step 5/5. Its activity is regulated as follows. Allosterically activated by AMP and inhibited by ATP. This is Pyruvate kinase (pyk) from Thermotoga maritima (strain ATCC 43589 / DSM 3109 / JCM 10099 / NBRC 100826 / MSB8).